A 442-amino-acid chain; its full sequence is Signal recognition particle 54 kDa protein (442 aa).

GTP is bound by residues 106-113 (GLQGSGKT), 186-190 (DTAGR), and 244-247 (TKLD).

The protein belongs to the GTP-binding SRP family. SRP54 subfamily. As to quaternary structure, part of the signal recognition particle protein translocation system, which is composed of SRP and FtsY. Archaeal SRP consists of a 7S RNA molecule of 300 nucleotides and two protein subunits: SRP54 and SRP19.

It localises to the cytoplasm. The catalysed reaction is GTP + H2O = GDP + phosphate + H(+). Involved in targeting and insertion of nascent membrane proteins into the cytoplasmic membrane. Binds to the hydrophobic signal sequence of the ribosome-nascent chain (RNC) as it emerges from the ribosomes. The SRP-RNC complex is then targeted to the cytoplasmic membrane where it interacts with the SRP receptor FtsY. The polypeptide is Signal recognition particle 54 kDa protein (Methanothermobacter thermautotrophicus (strain ATCC 29096 / DSM 1053 / JCM 10044 / NBRC 100330 / Delta H) (Methanobacterium thermoautotrophicum)).